Consider the following 362-residue polypeptide: DNA polymerase IV (362 aa).

Residues 6–187 (IIHVDMDAFY…LPVSSFHGVG (182 aa)) form the UmuC domain. Residues D10 and D105 each contribute to the Mg(2+) site. Residue E106 is part of the active site.

It belongs to the DNA polymerase type-Y family. As to quaternary structure, monomer. Mg(2+) serves as cofactor.

Its subcellular location is the cytoplasm. The catalysed reaction is DNA(n) + a 2'-deoxyribonucleoside 5'-triphosphate = DNA(n+1) + diphosphate. Its function is as follows. Poorly processive, error-prone DNA polymerase involved in untargeted mutagenesis. Copies undamaged DNA at stalled replication forks, which arise in vivo from mismatched or misaligned primer ends. These misaligned primers can be extended by PolIV. Exhibits no 3'-5' exonuclease (proofreading) activity. May be involved in translesional synthesis, in conjunction with the beta clamp from PolIII. This chain is DNA polymerase IV, found in Leptospira interrogans serogroup Icterohaemorrhagiae serovar copenhageni (strain Fiocruz L1-130).